Consider the following 1039-residue polypeptide: Probable inorganic carbon transporter subunit DabA 2 (1039 aa).

Residues cysteine 462, aspartate 464, histidine 721, and cysteine 736 each contribute to the Zn(2+) site.

It belongs to the inorganic carbon transporter (TC 9.A.2) DabA family. As to quaternary structure, forms a complex with DabB. Zn(2+) serves as cofactor.

Its subcellular location is the cell inner membrane. In terms of biological role, part of an energy-coupled inorganic carbon pump. This chain is Probable inorganic carbon transporter subunit DabA 2, found in Nitrobacter hamburgensis (strain DSM 10229 / NCIMB 13809 / X14).